We begin with the raw amino-acid sequence, 424 residues long: Tyrosine--tRNA ligase (424 aa).

Y37 provides a ligand contact to L-tyrosine. The short motif at 42–51 (PTADSLHLGH) is the 'HIGH' region element. N6-acetyllysine is present on K144. L-tyrosine is bound by residues Y175 and Q179. Positions 235-239 (KFGKT) match the 'KMSKS' region motif. Residue K238 participates in ATP binding. An S4 RNA-binding domain is found at 357–414 (ADLMQALVDSELQPSRGQARKTIASNAITINGEKQSDPEYFFKEEDRLFGRFTLLRRG).

This sequence belongs to the class-I aminoacyl-tRNA synthetase family. TyrS type 1 subfamily. Homodimer.

The protein localises to the cytoplasm. It catalyses the reaction tRNA(Tyr) + L-tyrosine + ATP = L-tyrosyl-tRNA(Tyr) + AMP + diphosphate + H(+). Functionally, catalyzes the attachment of tyrosine to tRNA(Tyr) in a two-step reaction: tyrosine is first activated by ATP to form Tyr-AMP and then transferred to the acceptor end of tRNA(Tyr). The polypeptide is Tyrosine--tRNA ligase (Shigella flexneri serotype 5b (strain 8401)).